A 423-amino-acid chain; its full sequence is Glutamate-1-semialdehyde 2,1-aminomutase (423 aa).

Lysine 266 carries the N6-(pyridoxal phosphate)lysine modification.

This sequence belongs to the class-III pyridoxal-phosphate-dependent aminotransferase family. HemL subfamily. As to quaternary structure, homodimer. Requires pyridoxal 5'-phosphate as cofactor.

The protein localises to the cytoplasm. It carries out the reaction (S)-4-amino-5-oxopentanoate = 5-aminolevulinate. It participates in porphyrin-containing compound metabolism; protoporphyrin-IX biosynthesis; 5-aminolevulinate from L-glutamyl-tRNA(Glu): step 2/2. The chain is Glutamate-1-semialdehyde 2,1-aminomutase from Nitratidesulfovibrio vulgaris (strain ATCC 29579 / DSM 644 / CCUG 34227 / NCIMB 8303 / VKM B-1760 / Hildenborough) (Desulfovibrio vulgaris).